The sequence spans 117 residues: Protein YchN (117 aa).

This sequence to M.jannaschii MJ0989. Homohexamer. The hexamer is formed by a dimer of trimers.

The sequence is that of Protein YchN (ychN) from Escherichia coli O157:H7.